Consider the following 251-residue polypeptide: Prothoracicostatic peptides (251 aa).

The disordered stretch occupies residues Met1–Gln22. Residues Met1 to Gly77 constitute a propeptide that is removed on maturation. At Trp89 the chain carries Tryptophan amide. Positions Gly93–Gly138 are excised as a propeptide. Position 152 is a tryptophan amide (Trp152). The propeptide occupies Ala156–Glu187. Residues Trp198 and Trp228 each carry the tryptophan amide modification. Residues Met227–Ala251 are disordered.

In terms of tissue distribution, prothoracicostatic peptide 5: Expressed in antennal lobe (AL), corpora cardiaca (CC), corpora allata (CA) and gnathal ganglion (GNG) (at protein level). Expression in AL detected in all animals, in CC, CA and GNG in most (at protein level). Prothoracicostatic peptide 6: Expressed in antennal lobe (AL), corpora cardiaca (CC), corpora allata (CA) and gnathal ganglion (GNG) (at protein level). Expression in AL detected in all animals, expression in GNG in most animals, in CA and CC detected in some animals (at protein level). Prothoracicostatic peptide 7: Expressed in antennal lobe (AL), corpora cardiaca (CC), corpora allata (CA) and gnathal ganglion (GNG) (at protein level). Expression in AL, CA and CC detected in most animals, expression in GNG in some animals (at protein level). Prothoracicostatic peptide precursor-related peptide 2: Expressed in antennal lobe (AL), corpora cardiaca (CC) and corpora allata (CA) with expression detected in few animals (at protein level). Not expressed in gnathal ganglion (GNG) (at protein level). Prothoracicostatic peptide 8: Expressed in antennal lobe (AL), corpora cardiaca (CC), corpora allata (CA) and gnathal ganglion (GNG) (at protein level). Expression in AL detected in all animals, expression in GNG in most animals, in CA and CC detected in some animals (at protein level). Prothoracicostatic peptide precursor-related peptide 3: Expressed in antennal lobe (AL) in few animals (at protein level). Not expressed in corpora cardiaca (CC), corpora allata (CA) and gnathal ganglion (GNG) (at protein level).

It is found in the secreted. This Agrotis ipsilon (Black cutworm moth) protein is Prothoracicostatic peptides.